A 312-amino-acid polypeptide reads, in one-letter code: Olfactory receptor 1D2 (312 aa).

The Extracellular segment spans residues 1–25 (MDGGNQSEGSEFLLLGMSESPEQQR). Residue asparagine 5 is glycosylated (N-linked (GlcNAc...) asparagine). A helical membrane pass occupies residues 26–49 (ILFWMFLSMYLVTVVGNVLIILAI). Residues 50-57 (SSDSCLHT) lie on the Cytoplasmic side of the membrane. Residues 58–79 (PMYFFLANLSFTDLFFVTNTIP) traverse the membrane as a helical segment. Residues 80 to 100 (KMLVNLQSQNKAISYAGCLTQ) are Extracellular-facing. Cysteines 97 and 189 form a disulfide. A helical transmembrane segment spans residues 101–120 (LYFLVSLVALDNLILAVMAY). Residues 121–139 (DRYVAICCPLHYTTAMSPK) are Cytoplasmic-facing. A helical membrane pass occupies residues 140–158 (LCILLLSLCWVLSVLYGLI). The Extracellular portion of the chain corresponds to 159 to 196 (HTLLMTRVTFCGSRKIHYIFCEMYVLLRMACSNIQTNH). A glycan (N-linked (GlcNAc...) asparagine) is linked at asparagine 195. The helical transmembrane segment at 197–219 (TVLIATGCFIFLIPFGFVIISYV) threads the bilayer. At 220–236 (LIIRAILRIPSLSKKYK) the chain is on the cytoplasmic side. A helical transmembrane segment spans residues 237 to 259 (AFSTCASHLGAVSLFYGTLCMVY). Residues 260–271 (LKPLHTYSVKDS) lie on the Extracellular side of the membrane. The helical transmembrane segment at 272–291 (VATVMYAVVTPMMNPFIYSL) threads the bilayer. The Cytoplasmic portion of the chain corresponds to 292–312 (RNKDMHGALGRLLDKHFKRLT).

The protein belongs to the G-protein coupled receptor 1 family.

It is found in the cell membrane. In terms of biological role, odorant receptor. The protein is Olfactory receptor 1D2 (OR1D2) of Pan troglodytes (Chimpanzee).